Here is a 500-residue protein sequence, read N- to C-terminus: Aspartyl/glutamyl-tRNA(Asn/Gln) amidotransferase subunit B (500 aa).

The protein belongs to the GatB/GatE family. GatB subfamily. In terms of assembly, heterotrimer of A, B and C subunits.

It catalyses the reaction L-glutamyl-tRNA(Gln) + L-glutamine + ATP + H2O = L-glutaminyl-tRNA(Gln) + L-glutamate + ADP + phosphate + H(+). The enzyme catalyses L-aspartyl-tRNA(Asn) + L-glutamine + ATP + H2O = L-asparaginyl-tRNA(Asn) + L-glutamate + ADP + phosphate + 2 H(+). Allows the formation of correctly charged Asn-tRNA(Asn) or Gln-tRNA(Gln) through the transamidation of misacylated Asp-tRNA(Asn) or Glu-tRNA(Gln) in organisms which lack either or both of asparaginyl-tRNA or glutaminyl-tRNA synthetases. The reaction takes place in the presence of glutamine and ATP through an activated phospho-Asp-tRNA(Asn) or phospho-Glu-tRNA(Gln). This Thermosynechococcus vestitus (strain NIES-2133 / IAM M-273 / BP-1) protein is Aspartyl/glutamyl-tRNA(Asn/Gln) amidotransferase subunit B.